The following is a 346-amino-acid chain: Putative transmembrane protein ORF346 (346 aa).

The next 6 helical transmembrane spans lie at 67-87, 104-124, 134-154, 156-176, 181-201, and 219-241; these read LPII…CIVY, IINP…VGLT, PPYL…SGIY, AIGD…GLFI, IILY…LCLS, and YPFS…LGSY. Residues 294–346 form a disordered region; that stretch reads SEYPHSENGSGGSGGSGSGSGSGGSGSGGNSGSGGSGSGSSGSGGNSGSGNNG. Positions 302 to 346 are enriched in gly residues; sequence GSGGSGGSGSGSGSGGSGSGGNSGSGGSGSGSSGSGGNSGSGNNG.

It localises to the host membrane. The sequence is that of Putative transmembrane protein ORF346 from Acidianus bottle-shaped virus (isolate Italy/Pozzuoli) (ABV).